The following is a 1104-amino-acid chain: Mitogen-activated protein kinase kinase kinase 9 (1104 aa).

The span at 12-22 (ASAAAAAPPGE) shows a compositional bias: low complexity. The segment at 12-47 (ASAAAAAPPGEDGAGAGAEEEEEEEEEAAAAVGPGE) is disordered. The span at 29 to 39 (AEEEEEEEEEA) shows a compositional bias: acidic residues. Residues 52-116 (APLPYWTAVF…PSNYVTPRSA (65 aa)) enclose the SH3 domain. Residues 144–412 (LTLEEIIGIG…LTTIEESGFF (269 aa)) enclose the Protein kinase domain. Residues 150–158 (IGIGGFGKV) and K171 each bind ATP. The active-site Proton acceptor is the D268. A phosphothreonine; by autocatalysis mark is found at T304 and T305. S308 is subject to Phosphoserine; by autocatalysis. T312 carries the phosphothreonine; by autocatalysis modification. Leucine-zipper regions lie at residues 430-451 (IQEM…EEEL) and 465-486 (LRRR…ELNI). Disordered stretches follow at residues 532-636 (ASPT…PHFH), 675-742 (MEDE…LKRG), 781-819 (EEPE…FKKE), and 890-1038 (RDPN…CFAS). A Phosphoserine modification is found at S533. Composition is skewed to polar residues over residues 566–575 (PGESSKTWGR) and 723–739 (PVNS…TNSL). Positions 785-797 (PPAREEKKRREGL) are enriched in basic and acidic residues. Residues 893–910 (NQSLTPTHVTLTTPSQPS) are compositionally biased toward polar residues. The span at 929–944 (SRSPSSNGLSPSPGAG) shows a compositional bias: low complexity. Residues 1014 to 1038 (HARSTSPANSSSTETPSNLDSCFAS) show a composition bias toward polar residues.

This sequence belongs to the protein kinase superfamily. STE Ser/Thr protein kinase family. MAP kinase kinase kinase subfamily. In terms of assembly, homodimer. Mg(2+) is required as a cofactor. Autophosphorylation on serine and threonine residues within the activation loop plays a role in enzyme activation. Thr-312 is likely to be the main autophosphorylation site. Autophosphorylation also occurs on Thr-304 and Ser-308. In terms of tissue distribution, expressed in epithelial tumor cell lines of colonic, breast and esophageal origin.

It catalyses the reaction L-seryl-[protein] + ATP = O-phospho-L-seryl-[protein] + ADP + H(+). The enzyme catalyses L-threonyl-[protein] + ATP = O-phospho-L-threonyl-[protein] + ADP + H(+). With respect to regulation, homodimerization via the leucine zipper domains is required for autophosphorylation of multiple sites in the activation loop and subsequent activation. Autophosphorylation at Thr-312 is the key step in activation of MAP3K9/MLK1 and is required for full phosphorylation. Autophosphorylation at Thr-304 and Ser-308 have been shown to be of secondary importance in the activation of MAP3K9/MLK1. CEP-1347 and many indolocarbazole analogs have been shown to act as inhibitors of MAP3K9/MLK1 activity. In terms of biological role, serine/threonine kinase which acts as an essential component of the MAP kinase signal transduction pathway. Plays an important role in the cascades of cellular responses evoked by changes in the environment. Once activated, acts as an upstream activator of the MKK/JNK signal transduction cascade through the phosphorylation of MAP2K4/MKK4 and MAP2K7/MKK7 which in turn activate the JNKs. The MKK/JNK signaling pathway regulates stress response via activator protein-1 (JUN) and GATA4 transcription factors. Also plays a role in mitochondrial death signaling pathway, including the release cytochrome c, leading to apoptosis. The protein is Mitogen-activated protein kinase kinase kinase 9 (MAP3K9) of Homo sapiens (Human).